Here is a 158-residue protein sequence, read N- to C-terminus: MTQFTHINASGEANMVDVSAKAETVREARAEAFVHMAPETLQLIVSGQHHKGDVFATARIAGIQAAKKTWDLIPLCHPLLLSKVEVQLEAIEAENKVRIESVCKLAGKTGVEMEALTAASVAALTIYDMCKAVQKDMVIGQVRLLEKTGGKSGHFKAE.

Residues 75–77 (LCH) and 113–114 (ME) contribute to the substrate site. D128 is a catalytic residue.

The protein belongs to the MoaC family. As to quaternary structure, homohexamer; trimer of dimers.

It catalyses the reaction (8S)-3',8-cyclo-7,8-dihydroguanosine 5'-triphosphate = cyclic pyranopterin phosphate + diphosphate. Its pathway is cofactor biosynthesis; molybdopterin biosynthesis. In terms of biological role, catalyzes the conversion of (8S)-3',8-cyclo-7,8-dihydroguanosine 5'-triphosphate to cyclic pyranopterin monophosphate (cPMP). This chain is Cyclic pyranopterin monophosphate synthase, found in Vibrio campbellii (strain ATCC BAA-1116).